A 184-amino-acid chain; its full sequence is Large ribosomal subunit protein uL15 (184 aa).

Residues 1-50 (MDLSSLRPAKGAVKNKKRVGRGQGSGNGTTAGKGNKGQQARSGYKRPINE) form a disordered region. A compositionally biased stretch (gly residues) spans 21-35 (RGQGSGNGTTAGKGN).

The protein belongs to the universal ribosomal protein uL15 family. In terms of assembly, part of the 50S ribosomal subunit.

Its function is as follows. Binds to the 23S rRNA. The sequence is that of Large ribosomal subunit protein uL15 from Chlorobium luteolum (strain DSM 273 / BCRC 81028 / 2530) (Pelodictyon luteolum).